Here is a 183-residue protein sequence, read N- to C-terminus: Small ribosomal subunit protein bS16 (183 aa).

Positions 149–161 are enriched in basic and acidic residues; that stretch reads EKKAAEAAAKAEA. The tract at residues 149–183 is disordered; the sequence is EKKAAEAAAKAEAEAANAPAEEAPAAEATEAPAEA. Positions 162–183 are enriched in low complexity; the sequence is EAANAPAEEAPAAEATEAPAEA.

This sequence belongs to the bacterial ribosomal protein bS16 family.

In Phocaeicola vulgatus (strain ATCC 8482 / DSM 1447 / JCM 5826 / CCUG 4940 / NBRC 14291 / NCTC 11154) (Bacteroides vulgatus), this protein is Small ribosomal subunit protein bS16.